The following is a 336-amino-acid chain: Putative cysteine synthase (336 aa).

Residue lysine 41 is modified to N6-(pyridoxal phosphate)lysine. Residues asparagine 71, 179–183 (GTGGS), and serine 269 each bind pyridoxal 5'-phosphate.

The protein belongs to the cysteine synthase/cystathionine beta-synthase family. Pyridoxal 5'-phosphate serves as cofactor.

It carries out the reaction O-acetyl-L-serine + hydrogen sulfide = L-cysteine + acetate. In terms of biological role, as it is highly similar to bacterial and plant cysteine synthases, it is possible that it catalyzes a related reaction. The polypeptide is Putative cysteine synthase (Sinorhizobium fredii (strain NBRC 101917 / NGR234)).